We begin with the raw amino-acid sequence, 212 residues long: Uracil phosphoribosyltransferase (212 aa).

5-phospho-alpha-D-ribose 1-diphosphate contacts are provided by residues R78, R103, and 130 to 138 (DPMLATGGS). Residues I193 and 198–200 (GDA) each bind uracil. Position 199 (D199) interacts with 5-phospho-alpha-D-ribose 1-diphosphate.

This sequence belongs to the UPRTase family. Mg(2+) serves as cofactor.

The enzyme catalyses UMP + diphosphate = 5-phospho-alpha-D-ribose 1-diphosphate + uracil. Its pathway is pyrimidine metabolism; UMP biosynthesis via salvage pathway; UMP from uracil: step 1/1. Allosterically activated by GTP. Its function is as follows. Catalyzes the conversion of uracil and 5-phospho-alpha-D-ribose 1-diphosphate (PRPP) to UMP and diphosphate. This chain is Uracil phosphoribosyltransferase, found in Ectopseudomonas mendocina (strain ymp) (Pseudomonas mendocina).